We begin with the raw amino-acid sequence, 321 residues long: MARRPKGRFIDGIVLLDKSTGMSSNFALQRVKRFFNANKAGHTGALDPLATGMLPVCLGEGTKFSQHLLDADKRYLVTAKLGERTDTSDSDGEVVQTRAIDFTEAQLLTALDFFRGETQQVPSMYSALKYQGQPLYKYAREGIEVPRESRPITVFELNFIGLEGDELTLDIHCSKGTYIRTIIDDLGEMLGCGAHVIMLRRTQVAQYPYARMVTLEQLEALVAQAHEQQIDPSVLLDPLLLPMDTAVADFPEVNVPDAIAPYLMQGQAVRVPVNADLKTDELVRITLGDIRRFVGIGTMNEDGLLAPKRLIVIHDEPAETD.

Catalysis depends on aspartate 47, which acts as the Nucleophile.

It belongs to the pseudouridine synthase TruB family. Type 1 subfamily.

It catalyses the reaction uridine(55) in tRNA = pseudouridine(55) in tRNA. In terms of biological role, responsible for synthesis of pseudouridine from uracil-55 in the psi GC loop of transfer RNAs. The chain is tRNA pseudouridine synthase B from Shewanella baltica (strain OS223).